The sequence spans 679 residues: Glycine--tRNA ligase beta subunit (679 aa).

It belongs to the class-II aminoacyl-tRNA synthetase family. Tetramer of two alpha and two beta subunits.

The protein localises to the cytoplasm. It catalyses the reaction tRNA(Gly) + glycine + ATP = glycyl-tRNA(Gly) + AMP + diphosphate. This is Glycine--tRNA ligase beta subunit (glyS) from Bacillus subtilis (strain 168).